The chain runs to 452 residues: tRNA modification GTPase MnmE (452 aa).

Positions 25, 81, and 120 each coordinate (6S)-5-formyl-5,6,7,8-tetrahydrofolate. A TrmE-type G domain is found at 216–375 (GITVVIAGEP…LKNHLKNTAG (160 aa)). Asn226 is a binding site for K(+). GTP contacts are provided by residues 226–231 (NVGKSS), 245–251 (TDIAGTT), and 270–273 (DTAG). Ser230 contacts Mg(2+). K(+)-binding residues include Thr245, Ile247, and Thr250. Mg(2+) is bound at residue Thr251. Lys452 lines the (6S)-5-formyl-5,6,7,8-tetrahydrofolate pocket.

Belongs to the TRAFAC class TrmE-Era-EngA-EngB-Septin-like GTPase superfamily. TrmE GTPase family. As to quaternary structure, homodimer. Heterotetramer of two MnmE and two MnmG subunits. It depends on K(+) as a cofactor.

Its subcellular location is the cytoplasm. In terms of biological role, exhibits a very high intrinsic GTPase hydrolysis rate. Involved in the addition of a carboxymethylaminomethyl (cmnm) group at the wobble position (U34) of certain tRNAs, forming tRNA-cmnm(5)s(2)U34. In Coxiella burnetii (strain Dugway 5J108-111), this protein is tRNA modification GTPase MnmE.